Here is a 715-residue protein sequence, read N- to C-terminus: Integrator complex subunit 13 (715 aa).

2 disordered regions span residues 572–612 (KPPE…SERI) and 626–659 (AEVIKDSPDSPEPPNKKPHIVIEDTGPAEKSKGP). Residues 581–591 (KRGRKREDKEE) carry the Nuclear localization signal (NLS) motif. The segment at 658 to 703 (GPMSLLSLWSSRINTANSRKHQEFVGRLNSVNNKAELYQHLKEENG) is cleavage module binding motif (CMBM).

The protein belongs to the Integrator subunit 13 family. In terms of assembly, component of the Integrator complex, composed of core subunits INTS1, INTS2, INTS3, INTS4, INTS5, INTS6, INTS7, INTS8, INTS9/RC74, INTS10, INTS11/CPSF3L, INTS12, INTS13, INTS14 and INTS15. The core complex associates with protein phosphatase 2A subunits PPP2CA and PPP2R1A, to form the Integrator-PP2A (INTAC) complex. INTS13 is part of the tail subcomplex, composed of INTS10, INTS13, INTS14 and INTS15.

It is found in the nucleus. The protein localises to the cytoplasm. Its function is as follows. Component of the integrator complex, a multiprotein complex that terminates RNA polymerase II (Pol II) transcription in the promoter-proximal region of genes. The integrator complex provides a quality checkpoint during transcription elongation by driving premature transcription termination of transcripts that are unfavorably configured for transcriptional elongation: the complex terminates transcription by (1) catalyzing dephosphorylation of the C-terminal domain (CTD) of Pol II subunit POLR2A/RPB1 and SUPT5H/SPT5, (2) degrading the exiting nascent RNA transcript via endonuclease activity and (3) promoting the release of Pol II from bound DNA. The integrator complex is also involved in terminating the synthesis of non-coding Pol II transcripts, such as enhancer RNAs (eRNAs), small nuclear RNAs (snRNAs), telomerase RNAs and long non-coding RNAs (lncRNAs). Within the integrator complex, INTS13 is part of the integrator tail module and acts as a platform for the recruitment of transcription factors at promoters. Plays a role in gastrulation and early embryogenesis. In Xenopus laevis (African clawed frog), this protein is Integrator complex subunit 13.